Consider the following 154-residue polypeptide: Aspartate carbamoyltransferase regulatory chain (154 aa).

Cysteine 110, cysteine 115, cysteine 136, and cysteine 139 together coordinate Zn(2+).

The protein belongs to the PyrI family. Contains catalytic and regulatory chains. The cofactor is Zn(2+).

Functionally, involved in allosteric regulation of aspartate carbamoyltransferase. The sequence is that of Aspartate carbamoyltransferase regulatory chain from Halobacterium salinarum (strain ATCC 700922 / JCM 11081 / NRC-1) (Halobacterium halobium).